A 173-amino-acid polypeptide reads, in one-letter code: Protein GrpE (173 aa).

Over residues 1-28 (MTEEEKTKSEAEEIEQNNKEEEQEKSVE) the composition is skewed to basic and acidic residues. The tract at residues 1-30 (MTEEEKTKSEAEEIEQNNKEEEQEKSVEEL) is disordered.

Belongs to the GrpE family. Homodimer.

Its subcellular location is the cytoplasm. Its function is as follows. Participates actively in the response to hyperosmotic and heat shock by preventing the aggregation of stress-denatured proteins, in association with DnaK and GrpE. It is the nucleotide exchange factor for DnaK and may function as a thermosensor. Unfolded proteins bind initially to DnaJ; upon interaction with the DnaJ-bound protein, DnaK hydrolyzes its bound ATP, resulting in the formation of a stable complex. GrpE releases ADP from DnaK; ATP binding to DnaK triggers the release of the substrate protein, thus completing the reaction cycle. Several rounds of ATP-dependent interactions between DnaJ, DnaK and GrpE are required for fully efficient folding. The chain is Protein GrpE from Methanosphaera stadtmanae (strain ATCC 43021 / DSM 3091 / JCM 11832 / MCB-3).